A 382-amino-acid polypeptide reads, in one-letter code: 3-isopropylmalate dehydrogenase (382 aa).

91–102 serves as a coordination point for NAD(+); the sequence is GPKWGTGSVRPE. The substrate site is built by Arg109, Arg119, Arg148, and Asp240. Mg(2+) is bound by residues Asp240, Asp265, and Asp269. 304–315 is a binding site for NAD(+); it reads GSAPDLTENKVN.

The protein belongs to the isocitrate and isopropylmalate dehydrogenases family. Homodimer. Mg(2+) serves as cofactor. It depends on Mn(2+) as a cofactor.

It localises to the cytoplasm. The catalysed reaction is (2R,3S)-3-isopropylmalate + NAD(+) = 4-methyl-2-oxopentanoate + CO2 + NADH. The protein operates within amino-acid biosynthesis; L-leucine biosynthesis; L-leucine from 3-methyl-2-oxobutanoate: step 3/4. Functionally, catalyzes the oxidation of 3-carboxy-2-hydroxy-4-methylpentanoate (3-isopropylmalate) to 3-carboxy-4-methyl-2-oxopentanoate. The product decarboxylates to 4-methyl-2 oxopentanoate. This is 3-isopropylmalate dehydrogenase (LEU2) from Debaryomyces hansenii (strain ATCC 36239 / CBS 767 / BCRC 21394 / JCM 1990 / NBRC 0083 / IGC 2968) (Yeast).